The primary structure comprises 432 residues: Trigger factor (432 aa).

The PPIase FKBP-type domain occupies 161 to 246 (DDRVTIDFVG…LKKIENMVLP (86 aa)).

The protein belongs to the FKBP-type PPIase family. Tig subfamily.

The protein resides in the cytoplasm. The catalysed reaction is [protein]-peptidylproline (omega=180) = [protein]-peptidylproline (omega=0). Involved in protein export. Acts as a chaperone by maintaining the newly synthesized protein in an open conformation. Functions as a peptidyl-prolyl cis-trans isomerase. This Haemophilus influenzae (strain 86-028NP) protein is Trigger factor.